The primary structure comprises 98 residues: Integration host factor subunit alpha (98 aa).

Belongs to the bacterial histone-like protein family. Heterodimer of an alpha and a beta chain.

In terms of biological role, this protein is one of the two subunits of integration host factor, a specific DNA-binding protein that functions in genetic recombination as well as in transcriptional and translational control. This is Integration host factor subunit alpha from Idiomarina loihiensis (strain ATCC BAA-735 / DSM 15497 / L2-TR).